A 630-amino-acid polypeptide reads, in one-letter code: Alpha-1,4-glucan:maltose-1-phosphate maltosyltransferase (630 aa).

The alpha-maltose 1-phosphate site is built by R234, Q294, and D329. D365 acts as the Nucleophile in catalysis. N366 serves as a coordination point for alpha-maltose 1-phosphate. E394 functions as the Proton donor in the catalytic mechanism. Position 504-505 (504-505 (KY)) interacts with alpha-maltose 1-phosphate.

The protein belongs to the glycosyl hydrolase 13 family. GlgE subfamily. As to quaternary structure, homodimer.

It carries out the reaction alpha-maltose 1-phosphate + [(1-&gt;4)-alpha-D-glucosyl](n) = [(1-&gt;4)-alpha-D-glucosyl](n+2) + phosphate. In terms of biological role, maltosyltransferase that uses maltose 1-phosphate (M1P) as the sugar donor to elongate linear or branched alpha-(1-&gt;4)-glucans. Is involved in a branched alpha-glucan biosynthetic pathway from trehalose, together with TreS, Mak and GlgB. In Picrophilus torridus (strain ATCC 700027 / DSM 9790 / JCM 10055 / NBRC 100828 / KAW 2/3), this protein is Alpha-1,4-glucan:maltose-1-phosphate maltosyltransferase.